Consider the following 224-residue polypeptide: Large ribosomal subunit protein uL3 (224 aa).

The segment at 132–153 (SQTKTHGTHEYQRHPGAIGQRK) is disordered.

The protein belongs to the universal ribosomal protein uL3 family. As to quaternary structure, part of the 50S ribosomal subunit. Forms a cluster with proteins L14 and L19.

Its function is as follows. One of the primary rRNA binding proteins, it binds directly near the 3'-end of the 23S rRNA, where it nucleates assembly of the 50S subunit. The polypeptide is Large ribosomal subunit protein uL3 (Myxococcus xanthus (strain DK1622)).